The sequence spans 183 residues: ATP synthase subunit delta (183 aa).

It belongs to the ATPase delta chain family. In terms of assembly, F-type ATPases have 2 components, F(1) - the catalytic core - and F(0) - the membrane proton channel. F(1) has five subunits: alpha(3), beta(3), gamma(1), delta(1), epsilon(1). F(0) has three main subunits: a(1), b(2) and c(10-14). The alpha and beta chains form an alternating ring which encloses part of the gamma chain. F(1) is attached to F(0) by a central stalk formed by the gamma and epsilon chains, while a peripheral stalk is formed by the delta and b chains.

The protein resides in the cell membrane. Functionally, f(1)F(0) ATP synthase produces ATP from ADP in the presence of a proton or sodium gradient. F-type ATPases consist of two structural domains, F(1) containing the extramembraneous catalytic core and F(0) containing the membrane proton channel, linked together by a central stalk and a peripheral stalk. During catalysis, ATP synthesis in the catalytic domain of F(1) is coupled via a rotary mechanism of the central stalk subunits to proton translocation. In terms of biological role, this protein is part of the stalk that links CF(0) to CF(1). It either transmits conformational changes from CF(0) to CF(1) or is implicated in proton conduction. The chain is ATP synthase subunit delta from Mesoplasma florum (strain ATCC 33453 / NBRC 100688 / NCTC 11704 / L1) (Acholeplasma florum).